Consider the following 89-residue polypeptide: MEKMPAKLLFERSIIGNKGSVIGKVKDIVFDEKVGRLVSLEVEPAEHSPIMREEGRNVLIPYKLVVAIKDVVVIDETNLNRVNIRVAEH.

This is an uncharacterized protein from Methanocaldococcus jannaschii (strain ATCC 43067 / DSM 2661 / JAL-1 / JCM 10045 / NBRC 100440) (Methanococcus jannaschii).